We begin with the raw amino-acid sequence, 210 residues long: Uridine kinase (210 aa).

Position 12 to 19 (12 to 19 (GGSGSGKT)) interacts with ATP.

It belongs to the uridine kinase family.

Its subcellular location is the cytoplasm. It carries out the reaction uridine + ATP = UMP + ADP + H(+). The enzyme catalyses cytidine + ATP = CMP + ADP + H(+). It functions in the pathway pyrimidine metabolism; CTP biosynthesis via salvage pathway; CTP from cytidine: step 1/3. The protein operates within pyrimidine metabolism; UMP biosynthesis via salvage pathway; UMP from uridine: step 1/1. The sequence is that of Uridine kinase from Bacillus pumilus (strain SAFR-032).